A 131-amino-acid polypeptide reads, in one-letter code: MPLYEHVLIARQDLSNAQAEGLIEHFSTVIADNGGKVVDNEYWGVRTLAYKINKNRKGHYAYLRSDAPSAAVQEMERLARLHDDVMRVLTVRVDEHKDGPSVQMQKRDERERGDRGDRGERRERRDRDDRN.

The disordered stretch occupies residues 92 to 131; it reads RVDEHKDGPSVQMQKRDERERGDRGDRGERRERRDRDDRN.

The protein belongs to the bacterial ribosomal protein bS6 family.

Functionally, binds together with bS18 to 16S ribosomal RNA. The sequence is that of Small ribosomal subunit protein bS6 from Paracoccus denitrificans (strain Pd 1222).